The chain runs to 264 residues: Phosphate import ATP-binding protein PstB (264 aa).

In terms of domain architecture, ABC transporter spans L11 to P250. G43 to S50 is a binding site for ATP.

It belongs to the ABC transporter superfamily. Phosphate importer (TC 3.A.1.7) family. As to quaternary structure, the complex is composed of two ATP-binding proteins (PstB), two transmembrane proteins (PstC and PstA) and a solute-binding protein (PstS).

Its subcellular location is the cell inner membrane. It carries out the reaction phosphate(out) + ATP + H2O = ADP + 2 phosphate(in) + H(+). Its function is as follows. Part of the ABC transporter complex PstSACB involved in phosphate import. Responsible for energy coupling to the transport system. The chain is Phosphate import ATP-binding protein PstB from Synechococcus elongatus (strain ATCC 33912 / PCC 7942 / FACHB-805) (Anacystis nidulans R2).